Reading from the N-terminus, the 219-residue chain is Cytidylate kinase (219 aa).

21-29 lines the ATP pocket; it reads GPAASGKGT.

The protein belongs to the cytidylate kinase family. Type 1 subfamily.

Its subcellular location is the cytoplasm. It catalyses the reaction CMP + ATP = CDP + ADP. The enzyme catalyses dCMP + ATP = dCDP + ADP. The sequence is that of Cytidylate kinase from Rickettsia akari (strain Hartford).